The following is a 967-amino-acid chain: Importin-alpha re-exporter (967 aa).

The Importin N-terminal domain maps to 20 to 95; that stretch reads AEEALKVWEL…KREIINLMLK (76 aa).

The protein belongs to the XPO2/CSE1 family. Binds with high affinity to importin-alpha only in the presence of RanGTP.

Its subcellular location is the cytoplasm. It is found in the nucleus envelope. Functionally, export receptor for importin alpha. Mediates importin-alpha re-export from the nucleus to the cytoplasm after import substrates have been released into the nucleoplasm. The sequence is that of Importin-alpha re-exporter (kap109) from Schizosaccharomyces pombe (strain 972 / ATCC 24843) (Fission yeast).